The following is a 138-amino-acid chain: MSWRRVILLSSLLALVLLCMLQEGTSASVGSRQAAAEGVQEGVKQKIFMQESDASNFLKRRGKRSPKSRDEVNAENRQRLRDDELRREYYEEQRNEFENFVEEQRDEQEERTREAVEQWRQWHYDGLYPSYLYNRQNI.

Positions 1–27 are cleaved as a signal peptide; sequence MSWRRVILLSSLLALVLLCMLQEGTSA. A propeptide spans 28-64 (ucma-N); it reads SVGSRQAAAEGVQEGVKQKIFMQESDASNFLKRRGKR. The segment at 58–78 is disordered; the sequence is LKRRGKRSPKSRDEVNAENRQ. Basic and acidic residues predominate over residues 67-78; the sequence is KSRDEVNAENRQ. A coiled-coil region spans residues 78-122; the sequence is QRLRDDELRREYYEEQRNEFENFVEEQRDEQEERTREAVEQWRQW.

This sequence belongs to the UCMA family. In terms of processing, proteolytically cleaved by a furin-like convertase to generate a persistent C-terminal fragment found in almost the entire cartilage matrix, and affecting osteoblast differentiation. Post-translationally, sulfated on one or two tyrosine residues within the tryptic peptide 121-135. In terms of tissue distribution, predominantly expressed in resting chondrocytes.

Its subcellular location is the secreted. It is found in the extracellular space. The protein localises to the extracellular matrix. It localises to the golgi apparatus. The protein resides in the cytoplasm. Its subcellular location is the cytoskeleton. May be involved in the negative control of osteogenic differentiation of osteochondrogenic precursor cells in peripheral zones of fetal cartilage and at the cartilage-bone interface. This Mus musculus (Mouse) protein is Unique cartilage matrix-associated protein (Ucma).